We begin with the raw amino-acid sequence, 755 residues long: Polyribonucleotide nucleotidyltransferase (755 aa).

Residues Asp-493 and Asp-499 each coordinate Mg(2+). In terms of domain architecture, KH spans 560–619 (PRIMTIQIPVDKIGALIGPGGKTIRNICETTGAQIDIEDDGRVFITTPDGAAARQAISMI). Residues 629 to 698 (GDIFLGKVVS…TTGKISLSRR (70 aa)) form the S1 motif domain. A disordered region spans residues 699 to 755 (AVLTGETPEERKAAGAAPRPRPREEQRGGRDEPRSLRDELRGPRREGDRPRPRRRDD). Over residues 719-755 (RPREEQRGGRDEPRSLRDELRGPRREGDRPRPRRRDD) the composition is skewed to basic and acidic residues.

This sequence belongs to the polyribonucleotide nucleotidyltransferase family. The cofactor is Mg(2+).

The protein resides in the cytoplasm. It carries out the reaction RNA(n+1) + phosphate = RNA(n) + a ribonucleoside 5'-diphosphate. In terms of biological role, involved in mRNA degradation. Catalyzes the phosphorolysis of single-stranded polyribonucleotides processively in the 3'- to 5'-direction. The chain is Polyribonucleotide nucleotidyltransferase from Chloroflexus aurantiacus (strain ATCC 29366 / DSM 635 / J-10-fl).